The primary structure comprises 477 residues: UDP-N-acetylmuramate--L-alanine ligase (477 aa).

G122–T128 is a binding site for ATP.

It belongs to the MurCDEF family.

The protein resides in the cytoplasm. The catalysed reaction is UDP-N-acetyl-alpha-D-muramate + L-alanine + ATP = UDP-N-acetyl-alpha-D-muramoyl-L-alanine + ADP + phosphate + H(+). It functions in the pathway cell wall biogenesis; peptidoglycan biosynthesis. Cell wall formation. The protein is UDP-N-acetylmuramate--L-alanine ligase of Xanthomonas euvesicatoria pv. vesicatoria (strain 85-10) (Xanthomonas campestris pv. vesicatoria).